The following is a 156-amino-acid chain: MNYDRIYPCDFVNGPGCRVVLFVTGCLHKCEGCYNRSTWNARNGQLFTMNTVKELASHLSKSYIQGLTLTGGDPLYPQNREEISNLVSWVKARFPEKDIWLWTGYKFEDIKQLEMLKYVDVIIDGKYEKNLPTKKLWRGSDNQRLWSNTDGVWKHD.

3 residues coordinate [4Fe-4S] cluster: C26, C30, and C33. Residues 32-34 (GCY) and G72 contribute to the S-adenosyl-L-methionine site.

It belongs to the organic radical-activating enzymes family. In terms of assembly, forms a tetramer composed of two NrdD and two NrdG subunits. [4Fe-4S] cluster is required as a cofactor.

The enzyme catalyses glycyl-[protein] + reduced [flavodoxin] + S-adenosyl-L-methionine = glycin-2-yl radical-[protein] + semiquinone [flavodoxin] + 5'-deoxyadenosine + L-methionine + H(+). Its function is as follows. Activation of anaerobic ribonucleoside-triphosphate reductase under anaerobic conditions by generation of an organic free radical, using S-adenosylmethionine and reduced flavodoxin as cosubstrates to produce 5'-deoxy-adenosine. This Escherichia coli (Bacteriophage T4) protein is Anaerobic ribonucleoside-triphosphate reductase-activating protein (NRDG).